We begin with the raw amino-acid sequence, 195 residues long: Phenoloxidase subunit 1 (195 aa).

His-10 is a binding site for Cu cation. Asn-77, Asn-97, and Asn-98 each carry an N-linked (GlcNAc...) asparagine glycan.

This sequence belongs to the tyrosinase family. In terms of assembly, heterodimer. The cofactor is Cu(2+).

The protein resides in the secreted. The catalysed reaction is 2 L-dopa + O2 = 2 L-dopaquinone + 2 H2O. It catalyses the reaction L-tyrosine + O2 = L-dopaquinone + H2O. Its function is as follows. This is a copper-containing oxidase that functions in the formation of pigments such as melanins and other polyphenolic compounds. Catalyzes the rate-limiting conversions of tyrosine to DOPA, DOPA to DOPA-quinone and possibly 5,6 dihydroxyindole to indole-5'6 quinone. This is Phenoloxidase subunit 1 from Simulium damnosum (Black fly).